A 232-amino-acid polypeptide reads, in one-letter code: Clarin-1 (232 aa).

A helical transmembrane segment spans residues 8–28 (IIFCMAGVLSFLCALGVVTAV). The N-linked (GlcNAc...) asparagine glycan is linked to N48. The next 2 helical transmembrane spans lie at 101–121 (IILFSMILVVLTMVGTAFFMY) and 135–155 (LGLYLVSFISGSCGCLVMILF). N184 is a glycosylation site (N-linked (GlcNAc...) asparagine). The chain crosses the membrane as a helical span at residues 186–206 (TTSFWVVFICFFVHFLNGLLI).

This sequence belongs to the clarin family.

The protein resides in the cell membrane. Functionally, may have a role in the excitatory ribbon synapse junctions between hair cells and cochlear ganglion cells and presumably also in analogous synapses within the retina. This chain is Clarin-1 (Clrn1), found in Mus musculus (Mouse).